Reading from the N-terminus, the 148-residue chain is UPF0756 membrane protein YeaL (148 aa).

The next 4 membrane-spanning stretches (helical) occupy residues 14 to 34 (ALGF…LIIV), 51 to 71 (LTVG…SGTL), 86 to 106 (LVAI…ITLM), and 121 to 141 (VLGV…AGLV).

This sequence belongs to the UPF0756 family.

It localises to the cell membrane. The chain is UPF0756 membrane protein YeaL from Salmonella choleraesuis (strain SC-B67).